The primary structure comprises 250 residues: Methionine aminopeptidase (250 aa).

His-77 serves as a coordination point for substrate. A divalent metal cation is bound by residues Asp-94, Asp-105, and His-169. His-176 is a binding site for substrate. A divalent metal cation-binding residues include Glu-202 and Glu-235.

Belongs to the peptidase M24A family. Methionine aminopeptidase type 1 subfamily. As to quaternary structure, monomer. Requires Co(2+) as cofactor. Zn(2+) is required as a cofactor. The cofactor is Mn(2+). It depends on Fe(2+) as a cofactor.

It catalyses the reaction Release of N-terminal amino acids, preferentially methionine, from peptides and arylamides.. In terms of biological role, removes the N-terminal methionine from nascent proteins. The N-terminal methionine is often cleaved when the second residue in the primary sequence is small and uncharged (Met-Ala-, Cys, Gly, Pro, Ser, Thr, or Val). Requires deformylation of the N(alpha)-formylated initiator methionine before it can be hydrolyzed. The sequence is that of Methionine aminopeptidase from Mycoplasmoides gallisepticum (strain R(low / passage 15 / clone 2)) (Mycoplasma gallisepticum).